Reading from the N-terminus, the 123-residue chain is Alpha-lactalbumin B/C (123 aa).

A C-type lysozyme domain is found at 1–123; sequence KQFTKCQLSQ…KLEQWLCEEL (123 aa). Disulfide bonds link C6–C120, C28–C111, C61–C77, and C73–C91. K79, D82, D84, D87, and D88 together coordinate Ca(2+).

It belongs to the glycosyl hydrolase 22 family. As to quaternary structure, lactose synthase (LS) is a heterodimer of a catalytic component, beta1,4-galactosyltransferase (beta4Gal-T1) and a regulatory component, alpha-lactalbumin (LA). In terms of tissue distribution, mammary gland specific. Secreted in milk.

It localises to the secreted. Its function is as follows. Regulatory subunit of lactose synthase, changes the substrate specificity of galactosyltransferase in the mammary gland making glucose a good acceptor substrate for this enzyme. This enables LS to synthesize lactose, the major carbohydrate component of milk. In other tissues, galactosyltransferase transfers galactose onto the N-acetylglucosamine of the oligosaccharide chains in glycoproteins. This chain is Alpha-lactalbumin B/C, found in Equus caballus (Horse).